The sequence spans 600 residues: Phosphoenolpyruvate carboxykinase (ATP) (600 aa).

302–309 (GLSGTGKT) serves as a coordination point for ATP.

The protein belongs to the phosphoenolpyruvate carboxykinase (ATP) family.

It carries out the reaction oxaloacetate + ATP = phosphoenolpyruvate + ADP + CO2. It functions in the pathway carbohydrate biosynthesis; gluconeogenesis. The protein is Phosphoenolpyruvate carboxykinase (ATP) (acuF) of Emericella nidulans (strain FGSC A4 / ATCC 38163 / CBS 112.46 / NRRL 194 / M139) (Aspergillus nidulans).